Consider the following 303-residue polypeptide: 2-dehydropantoate 2-reductase (303 aa).

NADP(+)-binding positions include 7–12, R35, N103, A129, and R131; that span reads GAGSLG. A substrate-binding site is contributed by N103. Catalysis depends on K182, which acts as the Proton donor. Substrate-binding residues include N186, N190, N200, and S250. Position 262 (E262) interacts with NADP(+).

Belongs to the ketopantoate reductase family.

Its subcellular location is the cytoplasm. The enzyme catalyses (R)-pantoate + NADP(+) = 2-dehydropantoate + NADPH + H(+). Its pathway is cofactor biosynthesis; (R)-pantothenate biosynthesis; (R)-pantoate from 3-methyl-2-oxobutanoate: step 2/2. In terms of biological role, catalyzes the NADPH-dependent reduction of ketopantoate into pantoic acid. In Pseudomonas aeruginosa (strain ATCC 15692 / DSM 22644 / CIP 104116 / JCM 14847 / LMG 12228 / 1C / PRS 101 / PAO1), this protein is 2-dehydropantoate 2-reductase (panE).